The following is a 478-amino-acid chain: Serralysin C (478 aa).

A propeptide spanning residues 1–17 (MEKNLSSRDDDALHSLS) is cleaved from the precursor. His187 contributes to the Zn(2+) binding site. Glu188 is a catalytic residue. Residues His191 and Tyr227 each contribute to the Zn(2+) site. Ca(2+) contacts are provided by Arg264, Gly266, Asp296, Gly298, Gly299, Asp301, Thr338, Glu340, Gly345, Gly347, Asp349, Asn354, Ala356, Asn358, Gly362, Gly363, Ala364, Gly365, Asp367, Gly371, Gly372, Gly374, Asp376, Gly380, Gly381, Gly383, Asp385, Asp394, Asp401, and Asp411. Hemolysin-type calcium-binding repeat units follow at residues 343–360 (IGGS…DNTL) and 361–378 (RGGA…ADRL).

It belongs to the peptidase M10B family. Ca(2+) is required as a cofactor. The cofactor is Zn(2+).

Its subcellular location is the secreted. The enzyme catalyses Preferential cleavage of bonds with hydrophobic residues in P1'.. In Dickeya chrysanthemi (Pectobacterium chrysanthemi), this protein is Serralysin C (prtC).